Reading from the N-terminus, the 88-residue chain is Small ribosomal subunit protein bS20 (88 aa).

2 disordered regions span residues 1–23 (MANSPQARKRARQAENRRQHNAA) and 69–88 (PNKAARHKSRLNTKIKAMAA). Basic residues predominate over residues 69 to 81 (PNKAARHKSRLNT).

The protein belongs to the bacterial ribosomal protein bS20 family.

Functionally, binds directly to 16S ribosomal RNA. The polypeptide is Small ribosomal subunit protein bS20 (Alcanivorax borkumensis (strain ATCC 700651 / DSM 11573 / NCIMB 13689 / SK2)).